Here is a 265-residue protein sequence, read N- to C-terminus: Acetylglutamate kinase (265 aa).

Substrate contacts are provided by residues 41 to 42 (GG), Arg63, and Asn156.

The protein belongs to the acetylglutamate kinase family. ArgB subfamily.

Its subcellular location is the cytoplasm. The enzyme catalyses N-acetyl-L-glutamate + ATP = N-acetyl-L-glutamyl 5-phosphate + ADP. It functions in the pathway amino-acid biosynthesis; L-arginine biosynthesis; N(2)-acetyl-L-ornithine from L-glutamate: step 2/4. Functionally, catalyzes the ATP-dependent phosphorylation of N-acetyl-L-glutamate. The protein is Acetylglutamate kinase of Oceanobacillus iheyensis (strain DSM 14371 / CIP 107618 / JCM 11309 / KCTC 3954 / HTE831).